We begin with the raw amino-acid sequence, 324 residues long: Phospho-N-acetylmuramoyl-pentapeptide-transferase (324 aa).

The next 10 membrane-spanning stretches (helical) occupy residues 5–25 (VILF…PILI), 50–70 (GTPT…TIVM), 77–97 (ISPE…LGFL), 117–137 (LIGQ…YNFA), 147–167 (LSFD…VGGS), 176–196 (LDGL…ILAW), 203–223 (VAIF…FNAH), 227–247 (VFMG…IAIL), 250–270 (LEIL…SVIL), and 302–322 (VVVT…YIEV).

It belongs to the glycosyltransferase 4 family. MraY subfamily. Mg(2+) is required as a cofactor.

The protein localises to the cell membrane. It carries out the reaction UDP-N-acetyl-alpha-D-muramoyl-L-alanyl-gamma-D-glutamyl-meso-2,6-diaminopimeloyl-D-alanyl-D-alanine + di-trans,octa-cis-undecaprenyl phosphate = di-trans,octa-cis-undecaprenyl diphospho-N-acetyl-alpha-D-muramoyl-L-alanyl-D-glutamyl-meso-2,6-diaminopimeloyl-D-alanyl-D-alanine + UMP. Its pathway is cell wall biogenesis; peptidoglycan biosynthesis. Catalyzes the initial step of the lipid cycle reactions in the biosynthesis of the cell wall peptidoglycan: transfers peptidoglycan precursor phospho-MurNAc-pentapeptide from UDP-MurNAc-pentapeptide onto the lipid carrier undecaprenyl phosphate, yielding undecaprenyl-pyrophosphoryl-MurNAc-pentapeptide, known as lipid I. This is Phospho-N-acetylmuramoyl-pentapeptide-transferase from Bacillus subtilis (strain 168).